A 314-amino-acid chain; its full sequence is 2,3-dihydroxyphenylpropionate/2,3-dihydroxicinnamic acid 1,2-dioxygenase 2 (314 aa).

Catalysis depends on His115, which acts as the Proton donor. His179 acts as the Proton acceptor in catalysis.

The protein belongs to the LigB/MhpB extradiol dioxygenase family. In terms of assembly, homotetramer. It depends on Fe(2+) as a cofactor.

The catalysed reaction is 3-(2,3-dihydroxyphenyl)propanoate + O2 = (2Z,4E)-2-hydroxy-6-oxonona-2,4-dienedioate + H(+). It carries out the reaction (2E)-3-(2,3-dihydroxyphenyl)prop-2-enoate + O2 = (2Z,4E,7E)-2-hydroxy-6-oxonona-2,4,7-trienedioate + H(+). It participates in aromatic compound metabolism; 3-phenylpropanoate degradation. Its function is as follows. Catalyzes the non-heme iron(II)-dependent oxidative cleavage of 2,3-dihydroxyphenylpropionic acid and 2,3-dihydroxicinnamic acid into 2-hydroxy-6-ketononadienedioate and 2-hydroxy-6-ketononatrienedioate, respectively. This Pseudomonas putida (Arthrobacter siderocapsulatus) protein is 2,3-dihydroxyphenylpropionate/2,3-dihydroxicinnamic acid 1,2-dioxygenase 2 (mhpB2).